The sequence spans 1417 residues: DNA-directed RNA polymerase subunit beta' (1417 aa).

The Zn(2+) site is built by Cys-68, Cys-70, Cys-83, and Cys-86. The Mg(2+) site is built by Asp-458, Asp-460, and Asp-462. Residues Cys-811, Cys-884, Cys-891, and Cys-894 each coordinate Zn(2+).

It belongs to the RNA polymerase beta' chain family. As to quaternary structure, the RNAP catalytic core consists of 2 alpha, 1 beta, 1 beta' and 1 omega subunit. When a sigma factor is associated with the core the holoenzyme is formed, which can initiate transcription. Mg(2+) serves as cofactor. It depends on Zn(2+) as a cofactor.

The catalysed reaction is RNA(n) + a ribonucleoside 5'-triphosphate = RNA(n+1) + diphosphate. Its function is as follows. DNA-dependent RNA polymerase catalyzes the transcription of DNA into RNA using the four ribonucleoside triphosphates as substrates. The polypeptide is DNA-directed RNA polymerase subunit beta' (Francisella tularensis subsp. tularensis (strain FSC 198)).